The following is a 311-amino-acid chain: HPr kinase/phosphorylase (311 aa).

Active-site residues include His138 and Lys159. 153 to 160 (GDSGIGKS) is a binding site for ATP. Ser160 lines the Mg(2+) pocket. The Proton acceptor; for phosphorylation activity. Proton donor; for dephosphorylation activity role is filled by Asp177. The segment at 201 to 210 (LEIRGVGIID) is important for the catalytic mechanism of both phosphorylation and dephosphorylation. A Mg(2+)-binding site is contributed by Glu202. Residue Arg243 is part of the active site. The important for the catalytic mechanism of dephosphorylation stretch occupies residues 264 to 269 (PVKTGR).

This sequence belongs to the HPrK/P family. Homohexamer. Mg(2+) serves as cofactor.

The enzyme catalyses [HPr protein]-L-serine + ATP = [HPr protein]-O-phospho-L-serine + ADP + H(+). It catalyses the reaction [HPr protein]-O-phospho-L-serine + phosphate + H(+) = [HPr protein]-L-serine + diphosphate. Catalyzes the ATP- as well as the pyrophosphate-dependent phosphorylation of a specific serine residue in HPr, a phosphocarrier protein of the phosphoenolpyruvate-dependent sugar phosphotransferase system (PTS). HprK/P also catalyzes the pyrophosphate-producing, inorganic phosphate-dependent dephosphorylation (phosphorolysis) of seryl-phosphorylated HPr (P-Ser-HPr). The two antagonistic activities of HprK/P are regulated by several intracellular metabolites, which change their concentration in response to the absence or presence of rapidly metabolisable carbon sources (glucose, fructose, etc.) in the growth medium. Therefore, by controlling the phosphorylation state of HPr, HPrK/P is a sensor enzyme that plays a major role in the regulation of carbon metabolism and sugar transport: it mediates carbon catabolite repression (CCR), and regulates PTS-catalyzed carbohydrate uptake and inducer exclusion. This is HPr kinase/phosphorylase from Streptococcus gordonii (strain Challis / ATCC 35105 / BCRC 15272 / CH1 / DL1 / V288).